A 316-amino-acid chain; its full sequence is Olfactory receptor 2T11 (316 aa).

The Extracellular portion of the chain corresponds to 1–22 (MTNTSSSDFTLLGLLVNSEAAG). An N-linked (GlcNAc...) asparagine glycan is attached at asparagine 3. A helical membrane pass occupies residues 23 to 46 (IVFTVILAVFLGAVTANLVMIFLI). Residues 47-54 (QVDSRLHT) are Cytoplasmic-facing. The chain crosses the membrane as a helical span at residues 55–76 (PMYFLLSQLSIMDTLFICTTVP). Over 77–97 (KLLADMVSKEKIISFVACGIQ) the chain is Extracellular. Cysteine 94 and cysteine 186 are oxidised to a cystine. Residues 98 to 117 (IFLYLTMIGSEFFLLGLMAY) form a helical membrane-spanning segment. The Cytoplasmic portion of the chain corresponds to 118–136 (DCYVAVCNPLRYPVLMNRK). The chain crosses the membrane as a helical span at residues 137–155 (KCLLLAAGAWFGGSLDGFL). Over 156-192 (LTPITMNVPYCGSRSINHFFCEIPAVLKLACADTSLY) the chain is Extracellular. The helical transmembrane segment at 193-216 (ETLMYICCVLMLLIPISIISTSYS) threads the bilayer. Over 217–233 (LILLTIHRMPSAEGRKK) the chain is Cytoplasmic. A helical membrane pass occupies residues 234 to 256 (AFTTCSSHLTVVSIFYGAAFYTY). Over 257–269 (VLPQSFHTPEQDK) the chain is Extracellular. Residues 270-289 (VVSAFYTIVTPMLNPLIYSL) form a helical membrane-spanning segment. Residues 290 to 316 (RNKDVIGAFKKVFACCSSAQKVATSDA) lie on the Cytoplasmic side of the membrane.

The protein belongs to the G-protein coupled receptor 1 family.

The protein localises to the cell membrane. In terms of biological role, odorant receptor. In Homo sapiens (Human), this protein is Olfactory receptor 2T11 (OR2T11).